The following is a 240-amino-acid chain: Glutathione S-transferase U9 (240 aa).

In terms of domain architecture, GST N-terminal spans 7 to 86 (NKVILHGSFA…YIDETWSNGP (80 aa)). Glutathione-binding positions include 17 to 18 (SP), 43 to 44 (NK), 57 to 58 (KI), and 70 to 71 (ES). In terms of domain architecture, GST C-terminal spans 92–226 (DPYRRSKVRF…EQILEILRAF (135 aa)). At Thr161 the chain carries Phosphothreonine.

It belongs to the GST superfamily. Tau family.

It localises to the cytoplasm. Its subcellular location is the cytosol. The catalysed reaction is RX + glutathione = an S-substituted glutathione + a halide anion + H(+). In terms of biological role, may be involved in the conjugation of reduced glutathione to a wide number of exogenous and endogenous hydrophobic electrophiles and have a detoxification role against certain herbicides. This is Glutathione S-transferase U9 (GSTU9) from Arabidopsis thaliana (Mouse-ear cress).